An 863-amino-acid chain; its full sequence is Leucine--tRNA ligase (863 aa).

A 'HIGH' region motif is present at residues 42 to 52; that stretch reads PYPSGRLHMGH. Positions 622–626 match the 'KMSKS' region motif; sequence KMSKS. Lys-625 contributes to the ATP binding site.

This sequence belongs to the class-I aminoacyl-tRNA synthetase family.

It is found in the cytoplasm. It carries out the reaction tRNA(Leu) + L-leucine + ATP = L-leucyl-tRNA(Leu) + AMP + diphosphate. The chain is Leucine--tRNA ligase from Shewanella loihica (strain ATCC BAA-1088 / PV-4).